Reading from the N-terminus, the 332-residue chain is MQLETQDALYVALELVIAALAVAGNVLVCAAVGASSALQTPTNYFLVSLATADVAVGLFAIPFAITISLGFCTDFHSCLFLACFVLVLTQSSIFSLLAVAVDRYLAIRVPLRYKGLVTGTRARGIIAVLWVLAFGIGLTPFLGWNSKDRATSNCTEPGDGITNKSCCPVKCLFENVVPMSYMVYFNFFGCVLPPLLIMMVIYIKIFMVACKQLQHMELMEHSRTTLQREIHAAKSLAMIVGIFALCWLPVHAINCITLFHPALAKDKPKWVMNVAILLSHANSVVNPIVYAYRNRDFRYSFHRIISRYVLCQTDTKGGSGQAGGQSTFSLSL.

The Extracellular segment spans residues 1–8; the sequence is MQLETQDA. A helical membrane pass occupies residues 9–33; sequence LYVALELVIAALAVAGNVLVCAAVG. Over 34-43 the chain is Cytoplasmic; the sequence is ASSALQTPTN. Residues 44–67 traverse the membrane as a helical segment; that stretch reads YFLVSLATADVAVGLFAIPFAITI. The Extracellular segment spans residues 68-78; the sequence is SLGFCTDFHSC. Cys-78 and Cys-171 are oxidised to a cystine. Residues 79 to 101 form a helical membrane-spanning segment; the sequence is LFLACFVLVLTQSSIFSLLAVAV. Residues 102-121 lie on the Cytoplasmic side of the membrane; the sequence is DRYLAIRVPLRYKGLVTGTR. A helical transmembrane segment spans residues 122–144; sequence ARGIIAVLWVLAFGIGLTPFLGW. Residues 145–178 are Extracellular-facing; the sequence is NSKDRATSNCTEPGDGITNKSCCPVKCLFENVVP. Residues Asn-153 and Asn-163 are each glycosylated (N-linked (GlcNAc...) asparagine). Glu-174 is an adenosine binding site. A helical transmembrane segment spans residues 179–203; it reads MSYMVYFNFFGCVLPPLLIMMVIYI. At 204 to 235 the chain is on the cytoplasmic side; the sequence is KIFMVACKQLQHMELMEHSRTTLQREIHAAKS. The helical transmembrane segment at 236–259 threads the bilayer; that stretch reads LAMIVGIFALCWLPVHAINCITLF. An adenosine-binding site is contributed by Asn-254. Residues 260 to 267 lie on the Extracellular side of the membrane; that stretch reads HPALAKDK. A helical membrane pass occupies residues 268 to 291; it reads PKWVMNVAILLSHANSVVNPIVYA. Ser-279 and His-280 together coordinate adenosine. The Cytoplasmic portion of the chain corresponds to 292–332; it reads YRNRDFRYSFHRIISRYVLCQTDTKGGSGQAGGQSTFSLSL. A lipid anchor (S-palmitoyl cysteine) is attached at Cys-311.

Belongs to the G-protein coupled receptor 1 family.

The protein localises to the cell membrane. Functionally, receptor for adenosine. The activity of this receptor is mediated by G proteins which activate adenylyl cyclase. The polypeptide is Adenosine receptor A2b (Adora2b) (Rattus norvegicus (Rat)).